The sequence spans 270 residues: MNLAVEIENLTFFYPDGNKALDGVSFVIPERSKTVILGHNGAGKSTLLLHLNGLYTASRGRVKIFGKVINEENIREIRKKVGLVFQDPDDQLFASTIFDDVAFGPQNLELDKKEILRRVEEALKAVDMWDLRERPPHHLSLGQKKRAAIAGVLAMEPDIVVLDEPMAYLDPRGQEEITAILNRLNNEGKTVIVSTHDLDWALEWADYVVVLNAGRVVAEGDKSILTNRQLLEQNGLKAPLLVKLFEDFEGKLGIPTNLKEARQILRKFIF.

Residues 5–238 (VEIENLTFFY…QLLEQNGLKA (234 aa)) form the ABC transporter domain. 38 to 45 (GHNGAGKS) is an ATP binding site.

The protein belongs to the ABC transporter superfamily. Energy-coupling factor EcfA family. Forms a stable energy-coupling factor (ECF) transporter complex composed of 2 membrane-embedded substrate-binding proteins (S component), 2 ATP-binding proteins (A component) and 2 transmembrane proteins (T component).

Its subcellular location is the cell membrane. Functionally, ATP-binding (A) component of a common energy-coupling factor (ECF) ABC-transporter complex. Unlike classic ABC transporters this ECF transporter provides the energy necessary to transport a number of different substrates. The polypeptide is Energy-coupling factor transporter ATP-binding protein EcfA (Carboxydothermus hydrogenoformans (strain ATCC BAA-161 / DSM 6008 / Z-2901)).